A 428-amino-acid chain; its full sequence is MHDIRAIRENPEAFDRDLERRGLAPLSAELIALDDVRKGAVSAAQAAQERRNALSKEIGAAKKAKDEARATELMAEVARLKEEAPGLEAAQGEAAKALDERLAAIPNRPKDDVPPGADEHGNVEYRRFDSSRERLTQGRQHFELGEATGLMDFEAAAKLSGSRFVVLKGQLARLERALGQFMLDLHTGEHGYTEVVPPVLVREEAMFGTAQLPKFRDDQFAAGENFWLIPTAEVPLTNLVRESILAEDELPLRFTALTPCFRAEAGAAGRDTRGMLRQHQFNKVELVSITAPEKSAEEHERMLACAEAVLQKLDLTYRVMTLCTGDMGFASQKTYDIEVWVPGQQTYREISSCSVCGEFQARRMNARYRAKEGRGVGFVHTLNGSGVAVGRALIAVMENYQNPDGSVTIPSALQPYMGGLTRIEGPKN.

L-serine is bound at residue 231–233 (TAE). Position 262-264 (262-264 (RAE)) interacts with ATP. Glu-285 is a binding site for L-serine. 349-352 (EISS) is a binding site for ATP. Ser-385 serves as a coordination point for L-serine.

Belongs to the class-II aminoacyl-tRNA synthetase family. Type-1 seryl-tRNA synthetase subfamily. Homodimer. The tRNA molecule binds across the dimer.

It localises to the cytoplasm. It carries out the reaction tRNA(Ser) + L-serine + ATP = L-seryl-tRNA(Ser) + AMP + diphosphate + H(+). The catalysed reaction is tRNA(Sec) + L-serine + ATP = L-seryl-tRNA(Sec) + AMP + diphosphate + H(+). The protein operates within aminoacyl-tRNA biosynthesis; selenocysteinyl-tRNA(Sec) biosynthesis; L-seryl-tRNA(Sec) from L-serine and tRNA(Sec): step 1/1. In terms of biological role, catalyzes the attachment of serine to tRNA(Ser). Is also able to aminoacylate tRNA(Sec) with serine, to form the misacylated tRNA L-seryl-tRNA(Sec), which will be further converted into selenocysteinyl-tRNA(Sec). The polypeptide is Serine--tRNA ligase (Methylorubrum extorquens (strain CM4 / NCIMB 13688) (Methylobacterium extorquens)).